Consider the following 856-residue polypeptide: DNA mismatch repair protein MutS (856 aa).

605–612 (GPNMSGKS) serves as a coordination point for ATP.

This sequence belongs to the DNA mismatch repair MutS family.

Its function is as follows. This protein is involved in the repair of mismatches in DNA. It is possible that it carries out the mismatch recognition step. This protein has a weak ATPase activity. The chain is DNA mismatch repair protein MutS from Lysinibacillus sphaericus (strain C3-41).